We begin with the raw amino-acid sequence, 427 residues long: UDP-N-acetylglucosamine 1-carboxyvinyltransferase 1 (427 aa).

A phosphoenolpyruvate-binding site is contributed by 23–24; sequence KN. Arg96 provides a ligand contact to UDP-N-acetyl-alpha-D-glucosamine. Cys120 acts as the Proton donor in catalysis. Cys120 carries the post-translational modification 2-(S-cysteinyl)pyruvic acid O-phosphothioketal. UDP-N-acetyl-alpha-D-glucosamine contacts are provided by residues 125–129, Asp309, and Val331; that span reads RPIDL.

It belongs to the EPSP synthase family. MurA subfamily.

It localises to the cytoplasm. It catalyses the reaction phosphoenolpyruvate + UDP-N-acetyl-alpha-D-glucosamine = UDP-N-acetyl-3-O-(1-carboxyvinyl)-alpha-D-glucosamine + phosphate. It functions in the pathway cell wall biogenesis; peptidoglycan biosynthesis. Functionally, cell wall formation. Adds enolpyruvyl to UDP-N-acetylglucosamine. This Streptococcus pneumoniae serotype 4 (strain ATCC BAA-334 / TIGR4) protein is UDP-N-acetylglucosamine 1-carboxyvinyltransferase 1.